A 155-amino-acid polypeptide reads, in one-letter code: Large ribosomal subunit protein uL15 (155 aa).

A compositionally biased stretch (basic and acidic residues) spans 1-13; the sequence is MKLNELRDAEGAT. Residues 1 to 41 are disordered; the sequence is MKLNELRDAEGATKARKRVGRGIGSGSGKTGGRGVKGQKSR. A compositionally biased stretch (gly residues) spans 21–35; it reads RGIGSGSGKTGGRGV.

Belongs to the universal ribosomal protein uL15 family. As to quaternary structure, part of the 50S ribosomal subunit.

Functionally, binds to the 23S rRNA. The polypeptide is Large ribosomal subunit protein uL15 (Chelativorans sp. (strain BNC1)).